The chain runs to 139 residues: Transcription antitermination protein NusB (139 aa).

It belongs to the NusB family.

Involved in transcription antitermination. Required for transcription of ribosomal RNA (rRNA) genes. Binds specifically to the boxA antiterminator sequence of the ribosomal RNA (rrn) operons. This Cronobacter sakazakii (strain ATCC BAA-894) (Enterobacter sakazakii) protein is Transcription antitermination protein NusB.